Here is a 353-residue protein sequence, read N- to C-terminus: Draxin-B (353 aa).

Positions 1–21 (MASSWCLPLALLVSNLAVSHS) are cleaved as a signal peptide. Disordered stretches follow at residues 23-183 (EPSS…KEGS), 198-222 (TVMS…RGKV), and 246-268 (VDAW…SGNV). The span at 138 to 167 (GPHKGKAQGHGHHFDHRRHGGRRDKGRHTK) shows a compositional bias: basic residues. Basic residues predominate over residues 252 to 261 (SRKKDKRRSK). Residues asparagine 262 and asparagine 267 are each glycosylated (N-linked (GlcNAc...) asparagine).

This sequence belongs to the draxin family.

The protein localises to the secreted. In terms of biological role, chemorepulsive axon guidance protein required for the development of spinal cord and forebrain commissures. Acts as a chemorepulsive guidance protein for commissural axons during development. Able to inhibit or repel neurite outgrowth from dorsal spinal cord. The chain is Draxin-B (draxin-B) from Salmo salar (Atlantic salmon).